Reading from the N-terminus, the 594-residue chain is Cationic amino acid transporter 1 (594 aa).

Alanine 2 bears the N-acetylalanine mark. The Cytoplasmic segment spans residues 2-78 (ASGGGDDGLR…EMKKTLTWWD (77 aa)). A helical membrane pass occupies residues 79–99 (LMWFGIGAVIGSGIFVLTGLE). Residues 100–104 (ARNHS) lie on the Extracellular side of the membrane. Residue asparagine 102 is glycosylated (N-linked (GlcNAc...) asparagine). The chain crosses the membrane as a helical span at residues 105–125 (GPAVVLSYVVSGVSAMLSVFC). The Cytoplasmic segment spans residues 126 to 149 (YTEFAVEIPVAGGSFAYLRVELGD). The chain crosses the membrane as a helical span at residues 150 to 170 (FMAFIAAGNIILEYVVGGAAV). Residues 171–201 (ARSWTSYFATLLNHKPEDFRIIVHKLGEDYS) lie on the Extracellular side of the membrane. A helical membrane pass occupies residues 202–222 (HLDPIAVGVCAIICVLAVVGT). Residues 223 to 227 (KGSSR) are Cytoplasmic-facing. The helical transmembrane segment at 228–248 (FNYIASIIHMVVILFVIIAGF) threads the bilayer. Residues 249–266 (TKADVKNYSDFTPYGVRG) lie on the Extracellular side of the membrane. Asparagine 255 carries an N-linked (GlcNAc...) asparagine glycan. Residues 267–287 (VFKSAAVLFFAYIGFDAVSTM) traverse the membrane as a helical segment. Residues 288-297 (AEETKNPGRD) are Cytoplasmic-facing. Residues 298 to 318 (IPIGLVGSMVVTTVCYCLMAV) form a helical membrane-spanning segment. The Extracellular portion of the chain corresponds to 319 to 348 (TLCLMQPYQQIDPDAPFSVAFSAVGWDWAK). The helical transmembrane segment at 349 to 369 (YIVAFGALKGMTTVLLVGAIG) threads the bilayer. The Cytoplasmic portion of the chain corresponds to 370–393 (QARYMTHIARAHMMPPWLAQVNAK). Residues 394–414 (TGTPINATVVMLAATALIAFF) form a helical membrane-spanning segment. Over 415 to 418 (TKLK) the chain is Extracellular. Residues 419–439 (ILADLLSVSTLFIFMFVAVAL) traverse the membrane as a helical segment. Residues 440 to 457 (LVRRYYVTGETSTRDRNK) lie on the Cytoplasmic side of the membrane. Residues 458 to 478 (FLVFLGLILASSTATAVYWAL) form a helical membrane-spanning segment. At 479-483 (EEEGW) the chain is on the extracellular side. The chain crosses the membrane as a helical span at residues 484–504 (IGYCITVPIWFLSTVAMKFLV). At 505–511 (PQARAPK) the chain is on the cytoplasmic side. Residues 512–532 (IWGVPLVPWLPSASIAINIFL) traverse the membrane as a helical segment. At 533-543 (LGSIDTKSFVR) the chain is on the extracellular side. A helical transmembrane segment spans residues 544-564 (FAIWTGILLIYYVLFGLHATY). Residues 565 to 594 (DTAKATLKEKQALQKAEEGGVVADNSCSAT) are Cytoplasmic-facing.

This sequence belongs to the amino acid-polyamine-organocation (APC) superfamily. Cationic amino acid transporter (CAT) (TC 2.A.3.3) family. Expressed in roots, stems, flowers, petioles, seeds, siliques, and leaves. Mostly present in major veins.

The protein resides in the membrane. With respect to regulation, inhibited by the protonophore 2,4-dinitrophenol. High-affinity permease involved in the transport of the cationic amino acids (e.g. arginine, lysine, histidine, citrulline, valine, and glutamate). Transport mostly basic amino acids, and, to a lower extent neutral and acidic amino acids. May function as a proton symporter. This Arabidopsis thaliana (Mouse-ear cress) protein is Cationic amino acid transporter 1 (CAT1).